The following is a 340-amino-acid chain: Phospho-N-acetylmuramoyl-pentapeptide-transferase (340 aa).

Helical transmembrane passes span Met-3–Ile-23, Gly-53–Phe-73, Ala-79–Leu-99, Met-119–Thr-139, Ile-144–Val-164, Ile-176–Phe-196, Glu-200–Phe-220, Val-227–Ala-247, Val-250–Leu-270, and Val-315–Leu-335.

It belongs to the glycosyltransferase 4 family. MraY subfamily. Mg(2+) is required as a cofactor.

It is found in the cell membrane. It carries out the reaction UDP-N-acetyl-alpha-D-muramoyl-L-alanyl-gamma-D-glutamyl-L-lysyl-D-alanyl-D-alanine + di-trans,octa-cis-undecaprenyl phosphate = Mur2Ac(oyl-L-Ala-gamma-D-Glu-L-Lys-D-Ala-D-Ala)-di-trans,octa-cis-undecaprenyl diphosphate + UMP. The protein operates within cell wall biogenesis; peptidoglycan biosynthesis. Functionally, catalyzes the initial step of the lipid cycle reactions in the biosynthesis of the cell wall peptidoglycan: transfers peptidoglycan precursor phospho-MurNAc-pentapeptide from UDP-MurNAc-pentapeptide onto the lipid carrier undecaprenyl phosphate, yielding undecaprenyl-pyrophosphoryl-MurNAc-pentapeptide, known as lipid I. This chain is Phospho-N-acetylmuramoyl-pentapeptide-transferase, found in Streptococcus thermophilus (strain ATCC BAA-250 / LMG 18311).